Reading from the N-terminus, the 274-residue chain is 4-diphosphocytidyl-2-C-methyl-D-erythritol kinase (274 aa).

K8 is a catalytic residue. 94–104 (PSGAGLGGGSS) contributes to the ATP binding site. Residue D136 is part of the active site.

The protein belongs to the GHMP kinase family. IspE subfamily.

The enzyme catalyses 4-CDP-2-C-methyl-D-erythritol + ATP = 4-CDP-2-C-methyl-D-erythritol 2-phosphate + ADP + H(+). The protein operates within isoprenoid biosynthesis; isopentenyl diphosphate biosynthesis via DXP pathway; isopentenyl diphosphate from 1-deoxy-D-xylulose 5-phosphate: step 3/6. Functionally, catalyzes the phosphorylation of the position 2 hydroxy group of 4-diphosphocytidyl-2C-methyl-D-erythritol. The chain is 4-diphosphocytidyl-2-C-methyl-D-erythritol kinase from Bacteroides thetaiotaomicron (strain ATCC 29148 / DSM 2079 / JCM 5827 / CCUG 10774 / NCTC 10582 / VPI-5482 / E50).